The chain runs to 155 residues: 6,7-dimethyl-8-ribityllumazine synthase (155 aa).

5-amino-6-(D-ribitylamino)uracil is bound by residues W18, 52-54 (AFE), and 76-78 (LVV). The Proton donor role is filled by R84. A 5-amino-6-(D-ribitylamino)uracil-binding site is contributed by S109. H123 lines the (2S)-2-hydroxy-3-oxobutyl phosphate pocket.

The protein belongs to the DMRL synthase family.

It carries out the reaction (2S)-2-hydroxy-3-oxobutyl phosphate + 5-amino-6-(D-ribitylamino)uracil = 6,7-dimethyl-8-(1-D-ribityl)lumazine + phosphate + 2 H2O + H(+). It functions in the pathway cofactor biosynthesis; riboflavin biosynthesis; riboflavin from 2-hydroxy-3-oxobutyl phosphate and 5-amino-6-(D-ribitylamino)uracil: step 1/2. Functionally, catalyzes the formation of 6,7-dimethyl-8-ribityllumazine by condensation of 5-amino-6-(D-ribitylamino)uracil with 3,4-dihydroxy-2-butanone 4-phosphate. This is the penultimate step in the biosynthesis of riboflavin. In Rhodococcus erythropolis (Arthrobacter picolinophilus), this protein is 6,7-dimethyl-8-ribityllumazine synthase.